An 840-amino-acid polypeptide reads, in one-letter code: Subtilisin-like protease SBT2.3 (840 aa).

Positions 1–27 (MVRVMLVRFGFLLLMISFVFLSNNTLG) are cleaved as a signal peptide. Residues 28 to 146 (QQQDDDDDSA…IVLDYSVRTA (119 aa)) constitute a propeptide, activation peptide. One can recognise an Inhibitor I9 domain in the interval 38 to 146 (VYIVTLKQPP…IVLDYSVRTA (109 aa)). Positions 61-81 (KSKFTPKLRPRNNSRKRHGKS) are enriched in basic residues. Residues 61-85 (KSKFTPKLRPRNNSRKRHGKSKIPS) are disordered. A glycan (N-linked (GlcNAc...) asparagine) is linked at Asn72. Positions 148 to 694 (TYTPQFMGLP…SGFVNATAAL (547 aa)) constitute a Peptidase S8 domain. The Charge relay system role is filled by Asp180. N-linked (GlcNAc...) asparagine glycans are attached at residues Asn193 and Asn241. Catalysis depends on His255, which acts as the Charge relay system. N-linked (GlcNAc...) asparagine glycans are attached at residues Asn398, Asn427, Asn480, Asn525, and Asn553. Residues 418–513 (MISAFHALNN…MDMPGIIIPS (96 aa)) enclose the PA domain. Ser619 functions as the Charge relay system in the catalytic mechanism. Residues Asn689, Asn715, Asn723, Asn767, and Asn808 are each glycosylated (N-linked (GlcNAc...) asparagine).

Belongs to the peptidase S8 family.

The protein resides in the secreted. The polypeptide is Subtilisin-like protease SBT2.3 (Arabidopsis thaliana (Mouse-ear cress)).